The primary structure comprises 63 residues: Large ribosomal subunit protein uL29 (63 aa).

It belongs to the universal ribosomal protein uL29 family.

The protein is Large ribosomal subunit protein uL29 (rpmC) of Buchnera aphidicola subsp. Acyrthosiphon kondoi (Acyrthosiphon kondoi symbiotic bacterium).